Consider the following 725-residue polypeptide: Golgin candidate 4 (725 aa).

The disordered stretch occupies residues 17 to 62 (HDVHDDDEDDDEDLTIYGSTNGGTDRRNSNGFRYSRSPMANGFESP). Over residues 21–30 (DDDEDDDEDL) the composition is skewed to acidic residues. Residues 66-132 (EIERYKAEIN…LKESRLDLSR (67 aa)) adopt a coiled-coil conformation. Disordered stretches follow at residues 134–183 (SNNN…SHKK), 191–210 (LEERTRSMASAQARELEKER), and 311–349 (ASQKSTSRKLFPKSTEDLSRHLSSLDEEKAGTFPGKEDM). Over residues 148–175 (NRSQRSPTNWKNRNQMNNGIASKPNGTE) the composition is skewed to polar residues. Coiled coils occupy residues 191–316 (LEER…QKST), 344–407 (PGKE…QTNE), and 437–563 (EIRK…LNRM). The segment covering 324–349 (STEDLSRHLSSLDEEKAGTFPGKEDM) has biased composition (basic and acidic residues). One can recognise a GRIP domain in the interval 562–613 (RMSMDSDFLVDRRIVIKLLVTYFQRNHSREVLDLMVRMLGFSEEEKQRIGLA). The span at 672-688 (ERERREAEDAANKEQEK) shows a compositional bias: basic and acidic residues. The tract at residues 672–725 (ERERREAEDAANKEQEKATVSSTQRPKYEQSDSEFSTVPLTSSNSNHRLSRLLT) is disordered. Residues 711–725 (LTSSNSNHRLSRLLT) are compositionally biased toward low complexity.

The protein localises to the golgi apparatus. Golgi matrix protein playing a role in tethering of vesicles to Golgi membranes and in maintaining the overall structure of the Golgi apparatus. The sequence is that of Golgin candidate 4 (GC4) from Arabidopsis thaliana (Mouse-ear cress).